Consider the following 157-residue polypeptide: 6,7-dimethyl-8-ribityllumazine synthase (157 aa).

Residues F22, 57–59, and 81–83 each bind 5-amino-6-(D-ribitylamino)uracil; these read AYE and TVI. 86–87 contacts (2S)-2-hydroxy-3-oxobutyl phosphate; it reads GT. The active-site Proton donor is the H89. A 5-amino-6-(D-ribitylamino)uracil-binding site is contributed by F114. R128 contributes to the (2S)-2-hydroxy-3-oxobutyl phosphate binding site.

This sequence belongs to the DMRL synthase family. In terms of assembly, forms an icosahedral capsid composed of 60 subunits, arranged as a dodecamer of pentamers.

It catalyses the reaction (2S)-2-hydroxy-3-oxobutyl phosphate + 5-amino-6-(D-ribitylamino)uracil = 6,7-dimethyl-8-(1-D-ribityl)lumazine + phosphate + 2 H2O + H(+). The protein operates within cofactor biosynthesis; riboflavin biosynthesis; riboflavin from 2-hydroxy-3-oxobutyl phosphate and 5-amino-6-(D-ribitylamino)uracil: step 1/2. Functionally, catalyzes the formation of 6,7-dimethyl-8-ribityllumazine by condensation of 5-amino-6-(D-ribitylamino)uracil with 3,4-dihydroxy-2-butanone 4-phosphate. This is the penultimate step in the biosynthesis of riboflavin. In Pasteurella multocida (strain Pm70), this protein is 6,7-dimethyl-8-ribityllumazine synthase.